The chain runs to 413 residues: 1-deoxy-D-xylulose 5-phosphate reductoisomerase (413 aa).

NADPH is bound by residues Thr-13, Gly-14, Ser-15, Ile-16, Lys-40, Asn-41, and Asn-127. Lys-128 is a 1-deoxy-D-xylulose 5-phosphate binding site. Glu-129 contacts NADPH. Asp-153 lines the Mn(2+) pocket. Ser-154, Glu-155, Ser-184, and His-207 together coordinate 1-deoxy-D-xylulose 5-phosphate. Residue Glu-155 participates in Mn(2+) binding. Residue Gly-213 coordinates NADPH. 1-deoxy-D-xylulose 5-phosphate is bound by residues Ser-220, Asn-225, Lys-226, and Glu-229. Mn(2+) is bound at residue Glu-229.

This sequence belongs to the DXR family. The cofactor is Mg(2+). It depends on Mn(2+) as a cofactor.

The catalysed reaction is 2-C-methyl-D-erythritol 4-phosphate + NADP(+) = 1-deoxy-D-xylulose 5-phosphate + NADPH + H(+). The protein operates within isoprenoid biosynthesis; isopentenyl diphosphate biosynthesis via DXP pathway; isopentenyl diphosphate from 1-deoxy-D-xylulose 5-phosphate: step 1/6. Catalyzes the NADPH-dependent rearrangement and reduction of 1-deoxy-D-xylulose-5-phosphate (DXP) to 2-C-methyl-D-erythritol 4-phosphate (MEP). In Nitrosomonas eutropha (strain DSM 101675 / C91 / Nm57), this protein is 1-deoxy-D-xylulose 5-phosphate reductoisomerase.